The sequence spans 367 residues: Peptide chain release factor 2 (367 aa).

Gln254 is subject to N5-methylglutamine.

The protein belongs to the prokaryotic/mitochondrial release factor family. In terms of processing, methylated by PrmC. Methylation increases the termination efficiency of RF2.

The protein localises to the cytoplasm. In terms of biological role, peptide chain release factor 2 directs the termination of translation in response to the peptide chain termination codons UGA and UAA. This chain is Peptide chain release factor 2, found in Bordetella avium (strain 197N).